Here is a 195-residue protein sequence, read N- to C-terminus: Pyridoxal 5'-phosphate synthase subunit PdxT (195 aa).

46 to 48 contacts L-glutamine; that stretch reads GES. The active-site Nucleophile is the cysteine 78. Residues arginine 106 and 134–135 contribute to the L-glutamine site; that span reads IR. Active-site charge relay system residues include histidine 170 and glutamate 172.

Belongs to the glutaminase PdxT/SNO family. In the presence of PdxS, forms a dodecamer of heterodimers. Only shows activity in the heterodimer.

The catalysed reaction is aldehydo-D-ribose 5-phosphate + D-glyceraldehyde 3-phosphate + L-glutamine = pyridoxal 5'-phosphate + L-glutamate + phosphate + 3 H2O + H(+). It catalyses the reaction L-glutamine + H2O = L-glutamate + NH4(+). It participates in cofactor biosynthesis; pyridoxal 5'-phosphate biosynthesis. Its function is as follows. Catalyzes the hydrolysis of glutamine to glutamate and ammonia as part of the biosynthesis of pyridoxal 5'-phosphate. The resulting ammonia molecule is channeled to the active site of PdxS. The sequence is that of Pyridoxal 5'-phosphate synthase subunit PdxT from Pseudothermotoga lettingae (strain ATCC BAA-301 / DSM 14385 / NBRC 107922 / TMO) (Thermotoga lettingae).